The primary structure comprises 217 residues: Large ribosomal subunit protein uL3 (217 aa).

The interval 129 to 162 is disordered; sequence SRGPMSHGSKNHRAPGSTGAGTTPGRIYPGKRMA. Over residues 142–153 the composition is skewed to low complexity; that stretch reads APGSTGAGTTPG.

Belongs to the universal ribosomal protein uL3 family. In terms of assembly, part of the 50S ribosomal subunit. Forms a cluster with proteins L14 and L19.

Functionally, one of the primary rRNA binding proteins, it binds directly near the 3'-end of the 23S rRNA, where it nucleates assembly of the 50S subunit. The polypeptide is Large ribosomal subunit protein uL3 (Prochlorococcus marinus (strain MIT 9215)).